The primary structure comprises 830 residues: MAEPSQAPNPVPAAQPRPLHSPAPAPTSTPAPSPASASTPAPTPAPAPAPAAAPAGSTGSGGAGVGSGGDPARPGLSQQQRASQRKAQVRGLPRAKKLEKLGVFSACKANETCKCNGWKNPKPPTAPRMDLQQPAANLSELCRSCEHPLADHVSHLENVSEDEINRLLGMVVDVENLFMSVHKEEDTDTKQVYFYLFKLLRKCILQMTRPVVEGSLGSPPFEKPNIEQGVLNFVQYKFSHLAPRERQTMFELSKMFLLCLNYWKLETPAQFRQRSQSEDVATYKVNYTRWLCYCHVPQSCDSLPRYETTHVFGRSLLRSIFTVTRRQLLEKFRVEKDKLVPEKRTLILTHFPKFLSMLEEEIYGANSPIWESGFTMPPSEGTQLVPRPATVSATVVPSFSPSMGGGSNSSLSLDSAGTEPMPAGEKRKLPENLTLEDAKRLRVMGDIPMELVNEVMLTITDPAAMLGPETSLLSANAARDETARLEERRGIIEFHVIGNSLTPKANRRVLLWLVGLQNVFSHQLPRMPKEYIARLVFDPKHKTLALIKDGRVIGGICFRMFPTQGFTEIVFCAVTSNEQVKGYGTHLMNHLKEYHIKHSILYFLTYADEYAIGYFKKQGFSKDIKVPKSRYLGYIKDYEGATLMECELNPRIPYTELSHIIKKQKEIIKKLIERKQAQIRKVYPGLSCFKEGVRQIPVESVPGIRETGWKPLGKEKGKELKDPDQLYTTLKNLLAQIKSHPSAWPFMEPVKKSEAPDYYEVIRFPIDLKTMTERLRSRYYVTRKLFVADLQRVIANCREYNPPDSEYCRCASALEKFFYFKLKEGGLIDK.

Residues 1-94 are disordered; the sequence is MAEPSQAPNP…RKAQVRGLPR (94 aa). The residue at position 2 (Ala-2) is an N-acetylalanine. Composition is skewed to pro residues over residues 7 to 33 and 41 to 51; these read APNPVPAAQPRPLHSPAPAPTSTPAPS and APTPAPAPAPA. The span at 58–69 shows a compositional bias: gly residues; the sequence is TGSGGAGVGSGG. Residues 83-94 show a composition bias toward basic residues; the sequence is SQRKAQVRGLPR. A Phosphoserine modification is found at Ser-302. The span at 398-417 shows a compositional bias: low complexity; the sequence is SFSPSMGGGSNSSLSLDSAG. A disordered region spans residues 398-426; that stretch reads SFSPSMGGGSNSSLSLDSAGTEPMPAGEK. The region spanning 496 to 649 is the N-acetyltransferase domain; the sequence is VIGNSLTPKA…GATLMECELN (154 aa). N6-acetyllysine is present on Lys-542. Catalysis depends on Glu-568, which acts as the Proton donor/acceptor. Acetyl-CoA contacts are provided by residues 572–574, 579–585, and Tyr-610; these read CAV and QVKGYGT. Succinyl-CoA-binding positions include 572–574, 579–585, and Tyr-610; these read CAV and QVKGYGT. A Glycyl lysine isopeptide (Lys-Gly) (interchain with G-Cter in SUMO2) cross-link involves residue Lys-721. In terms of domain architecture, Bromo spans 721–825; it reads KDPDQLYTTL…KFFYFKLKEG (105 aa). Thr-728 carries the post-translational modification Phosphothreonine. Glycyl lysine isopeptide (Lys-Gly) (interchain with G-Cter in SUMO2) cross-links involve residues Lys-752 and Lys-784.

The protein belongs to the acetyltransferase family. GCN5 subfamily. Interacts with EP300, CREBBP and ADA2. Component of the TFTC-HAT complex, at least composed of TAF5L, TAF6L, TAF3, TADA3L, SUPT3H/SPT3, TAF2/TAFII150, TAF4/TAFII135, TAF5/TAFII100, KAT2A/GCN5L2, TAF10 and TRRAP. Component of the STAGA transcription coactivator-HAT complex, at least composed of SUPT3H, KAT2A, SUPT7L, TAF5L, TAF6L, TADA3L, TAD1L, TAF10, TAF12, TRRAP and TAF9. The STAGA core complex is associated with a subcomplex required for histone deubiquitination composed of ATXN7L3, ENY2 and USP22. Component of the ADA2A-containing complex (ATAC), composed of KAT14, KAT2A, TADA2L, TADA3L, ZZ3, MBIP, WDR5, YEATS2, CCDC101 and DR1. In the complex, it probably interacts directly with KAT14, MBIP and WDR5. Interacts with PML. Interacts with CEBPB. Interacts with TACC1, TACC2 and TACC3. Interacts with RELA. Interacts with NFATC2. Interacts with TBX5. Interacts with PLK4. Associates with the 2-oxoglutarate dehydrogenase complex. Interacts with XPC; leading to KAT2A recruitment to promoters and subsequent acetylation of histones. Interacts with ERCC3/XPB; leading to KAT2A recruitment to promoters and subsequent acetylation of histones. Interacts with ISL1. Interactions of ISL1 with MLIP1 or KAT2A may be mutually exclusive. Post-translationally, acetylated at Lys-542, inhibiting the protein acetyltransferase activity. Deacetylation at Lys-542 by SIRT6 promotes phosphorylation at Ser-302 and Thr-728 and subsequent activation of the protein acetyltransferase activity, leading to acetylation and inactivation of PPARGC1A. As to expression, in brain, highly expressed in the hippocampal CA1 region (at protein level). Also expressed in the hippocampal subregions CA3 and the dentate gyrus as well as in the cortex and prefrontal cortex. Expressed at low level in the cerebellum.

Its subcellular location is the nucleus. It is found in the chromosome. It localises to the cytoplasm. The protein localises to the cytoskeleton. The protein resides in the microtubule organizing center. Its subcellular location is the centrosome. The enzyme catalyses L-lysyl-[histone] + acetyl-CoA = N(6)-acetyl-L-lysyl-[histone] + CoA + H(+). It carries out the reaction L-lysyl-[protein] + acetyl-CoA = N(6)-acetyl-L-lysyl-[protein] + CoA + H(+). It catalyses the reaction succinyl-CoA + L-lysyl-[protein] = N(6)-succinyl-L-lysyl-[protein] + CoA + H(+). The catalysed reaction is glutaryl-CoA + L-lysyl-[protein] = N(6)-glutaryl-L-lysyl-[protein] + CoA + H(+). In terms of biological role, protein lysine acyltransferase that can act as a acetyltransferase, glutaryltransferase, succinyltransferase or malonyltransferase, depending on the context. Acts as a histone lysine succinyltransferase: catalyzes succinylation of histone H3 on 'Lys-79' (H3K79succ), with a maximum frequency around the transcription start sites of genes. Succinylation of histones gives a specific tag for epigenetic transcription activation. Association with the 2-oxoglutarate dehydrogenase complex, which provides succinyl-CoA, is required for histone succinylation. In different complexes, functions either as an acetyltransferase (HAT) or as a succinyltransferase: in the SAGA and ATAC complexes, acts as a histone acetyltransferase. Has significant histone acetyltransferase activity with core histones, but not with nucleosome core particles. Has a a strong preference for acetylation of H3 at 'Lys-9' (H3K9ac). Acetylation of histones gives a specific tag for epigenetic transcription activation. Recruited by the XPC complex at promoters, where it specifically mediates acetylation of histone variant H2A.Z.1/H2A.Z, thereby promoting expression of target genes. Involved in long-term memory consolidation and synaptic plasticity: acts by promoting expression of a hippocampal gene expression network linked to neuroactive receptor signaling. Acts as a positive regulator of T-cell activation: upon TCR stimulation, recruited to the IL2 promoter following interaction with NFATC2 and catalyzes acetylation of histone H3 at 'Lys-9' (H3K9ac), leading to promote IL2 expression. Required for growth and differentiation of craniofacial cartilage and bone by regulating acetylation of histone H3 at 'Lys-9' (H3K9ac). Regulates embryonic stem cell (ESC) pluripotency and differentiation. Also acetylates non-histone proteins, such as CEBPB, MRE11, PPARGC1A, PLK4 and TBX5. Involved in heart and limb development by mediating acetylation of TBX5, acetylation regulating nucleocytoplasmic shuttling of TBX5. Acts as a negative regulator of centrosome amplification by mediating acetylation of PLK4. Acts as a negative regulator of gluconeogenesis by mediating acetylation and subsequent inactivation of PPARGC1A. Also acts as a histone glutaryltransferase: catalyzes glutarylation of histone H4 on 'Lys-91' (H4K91glu), a mark that destabilizes nucleosomes by promoting dissociation of the H2A-H2B dimers from nucleosomes. The polypeptide is Histone acetyltransferase KAT2A (Mus musculus (Mouse)).